A 122-amino-acid chain; its full sequence is MIKKPTSNVARLRKHKRVRKKVFGTPERPRLNVYRSLTNIYAQVIDDTVGRTLVSASSLEKEIKSKLGYCGNKQAAREVGKLVAQRALANGIKRVVFDRGGYIYHGRVKELAEGAREAGLEF.

This sequence belongs to the universal ribosomal protein uL18 family. Part of the 50S ribosomal subunit; part of the 5S rRNA/L5/L18/L25 subcomplex. Contacts the 5S and 23S rRNAs.

Functionally, this is one of the proteins that bind and probably mediate the attachment of the 5S RNA into the large ribosomal subunit, where it forms part of the central protuberance. The polypeptide is Large ribosomal subunit protein uL18 (Acetivibrio thermocellus (strain ATCC 27405 / DSM 1237 / JCM 9322 / NBRC 103400 / NCIMB 10682 / NRRL B-4536 / VPI 7372) (Clostridium thermocellum)).